Reading from the N-terminus, the 175-residue chain is Ribosome maturation factor RimM (175 aa).

A PRC barrel domain is found at P96 to L172.

Belongs to the RimM family. Binds ribosomal protein uS19.

The protein resides in the cytoplasm. Its function is as follows. An accessory protein needed during the final step in the assembly of 30S ribosomal subunit, possibly for assembly of the head region. Essential for efficient processing of 16S rRNA. May be needed both before and after RbfA during the maturation of 16S rRNA. It has affinity for free ribosomal 30S subunits but not for 70S ribosomes. The protein is Ribosome maturation factor RimM of Mycolicibacterium paratuberculosis (strain ATCC BAA-968 / K-10) (Mycobacterium paratuberculosis).